We begin with the raw amino-acid sequence, 337 residues long: Large ribosomal subunit protein uL3 (337 aa).

Residues 1-29 are disordered; that stretch reads MARHHQPRKGSVAFSPRKRAARETPRVKS.

It belongs to the universal ribosomal protein uL3 family. Part of the 50S ribosomal subunit. Forms a cluster with proteins L14 and L24e.

Its function is as follows. One of the primary rRNA binding proteins, it binds directly near the 3'-end of the 23S rRNA, where it nucleates assembly of the 50S subunit. In Methanothermobacter thermautotrophicus (strain ATCC 29096 / DSM 1053 / JCM 10044 / NBRC 100330 / Delta H) (Methanobacterium thermoautotrophicum), this protein is Large ribosomal subunit protein uL3.